A 33-amino-acid chain; its full sequence is MNLEIVFQLTSLVLILAAGPLVVVLLSARGGNL.

The helical transmembrane segment at 5 to 25 (IVFQLTSLVLILAAGPLVVVL) threads the bilayer.

This sequence belongs to the Psb30/Ycf12 family. In terms of assembly, PSII is composed of 1 copy each of membrane proteins PsbA, PsbB, PsbC, PsbD, PsbE, PsbF, PsbH, PsbI, PsbJ, PsbK, PsbL, PsbM, PsbT, PsbX, PsbY, PsbZ, Psb30/Ycf12, peripheral proteins of the oxygen-evolving complex and a large number of cofactors. It forms dimeric complexes.

It localises to the plastid. The protein localises to the chloroplast thylakoid membrane. A core subunit of photosystem II (PSII), probably helps stabilize the reaction center. The protein is Photosystem II reaction center protein Psb30 of Tetradesmus obliquus (Green alga).